The chain runs to 365 residues: Myocyte-specific enhancer factor 2B (365 aa).

The region spanning 3-57 is the MADS-box domain; it reads RKKIQISRILDQRNRQVTFTKRKFGLMKKAYELSVLCDCEIALIIFNSANRLFQY. Residues 58 to 86 constitute a DNA-binding region (mef2-type); sequence ASTDMDRVLLKYTEYSEPHESRTNTDILE. 3 disordered regions span residues 94–124, 142–309, and 321–365; these read GLDGPELEPDEGPEEPGEKFRRLAGEGGDPA, VVYG…SPGP, and AGCP…KTQQ. The span at 98 to 108 shows a compositional bias: acidic residues; that stretch reads PELEPDEGPEE. Residues 223–240 are compositionally biased toward polar residues; that stretch reads NTSRSLYSGLQNPCSTAT. 2 stretches are compositionally biased toward low complexity: residues 277-289 and 326-346; these read PQSASSLSASLRP and PTAGPGRRSPGGTSPERSPGT. Residues 354–365 show a composition bias toward polar residues; that stretch reads TSLQASSEKTQQ.

Belongs to the MEF2 family. Interacts with HDAC7. Heterodimer. Interacts with HDAC9. In terms of tissue distribution, expressed in skeletal and cardiac muscle and brain.

It is found in the nucleus. Its function is as follows. Transcriptional activator which binds specifically to the MEF2 element, 5'-YTA[AT](4)TAR-3', found in numerous muscle-specific genes. Activates transcription via this element. May be involved in muscle-specific and/or growth factor-related transcription. This Homo sapiens (Human) protein is Myocyte-specific enhancer factor 2B (MEF2B).